We begin with the raw amino-acid sequence, 544 residues long: 4-coumarate--CoA ligase 2 (544 aa).

The ATP site is built by Ser190, Ser191, Gly192, Thr193, Thr194, and Lys198. Tyr240 contributes to the (E)-4-coumaroyl-AMP binding site. Lys261 contacts CoA. The segment at 263–332 (DIVPFLELIQ…AKFPNAKLGQ (70 aa)) is SBD1. Residues Ala310, Gln332, Gly333, Thr337, and Met345 each coordinate (E)-4-coumaroyl-AMP. ATP is bound by residues Gln332, Gly333, and Thr337. Residues 333–400 (GYGMTEAGPV…IRGDQIMKGY (68 aa)) are SBD2. ATP contacts are provided by Asp421 and Arg436. Lys438 and Lys442 together coordinate (E)-4-coumaroyl-AMP. CoA-binding residues include Lys444 and Gly445. Lys527 contacts ATP.

Belongs to the ATP-dependent AMP-binding enzyme family. Requires Mg(2+) as cofactor.

The enzyme catalyses (E)-4-coumarate + ATP + CoA = (E)-4-coumaroyl-CoA + AMP + diphosphate. It catalyses the reaction (E)-4-coumarate + ATP + H(+) = (E)-4-coumaroyl-AMP + diphosphate. The catalysed reaction is (E)-4-coumaroyl-AMP + CoA = (E)-4-coumaroyl-CoA + AMP + H(+). Its pathway is phytoalexin biosynthesis; 3,4',5-trihydroxystilbene biosynthesis; 3,4',5-trihydroxystilbene from trans-4-coumarate: step 1/2. Carboxylate--CoA ligase that may use 4-coumarate as substrate. Follows a two-step reaction mechanism, wherein the carboxylate substrate first undergoes adenylation by ATP, followed by a thioesterification in the presence of CoA to yield the final CoA thioester. The sequence is that of 4-coumarate--CoA ligase 2 (4CL2) from Petroselinum crispum (Parsley).